A 101-amino-acid chain; its full sequence is Interleukin-8 (101 aa).

A signal peptide spans 1-22 (MPSQLRVAVLAAFLLSAVLCEG). Disulfide bonds link Cys34/Cys61 and Cys36/Cys77.

The protein belongs to the intercrine alpha (chemokine CxC) family. Homodimer. Interacts with TNFAIP6 (via Link domain); this interaction interferes with chemokine binding to glycosaminoglycans.

It is found in the secreted. Chemotactic factor that mediates inflammatory response by attracting neutrophils, basophils, and T-cells to clear pathogens and protect the host from infection. Also plays an important role in neutrophil activation. Released in response to an inflammatory stimulus, exerts its effect by binding to the G-protein-coupled receptors CXCR1 and CXCR2, primarily found in neutrophils, monocytes and endothelial cells. G-protein heterotrimer (alpha, beta, gamma subunits) constitutively binds to CXCR1/CXCR2 receptor and activation by IL8 leads to beta and gamma subunits release from Galpha (GNAI2 in neutrophils) and activation of several downstream signaling pathways including PI3K and MAPK pathways. The polypeptide is Interleukin-8 (CXCL8) (Cavia porcellus (Guinea pig)).